The sequence spans 530 residues: Bifunctional purine biosynthesis protein PurH (530 aa).

Residues 1-148 (MNNPRPIRRA…KNHKDVTIVV (148 aa)) enclose the MGS-like domain.

Belongs to the PurH family.

It catalyses the reaction (6R)-10-formyltetrahydrofolate + 5-amino-1-(5-phospho-beta-D-ribosyl)imidazole-4-carboxamide = 5-formamido-1-(5-phospho-D-ribosyl)imidazole-4-carboxamide + (6S)-5,6,7,8-tetrahydrofolate. The enzyme catalyses IMP + H2O = 5-formamido-1-(5-phospho-D-ribosyl)imidazole-4-carboxamide. It functions in the pathway purine metabolism; IMP biosynthesis via de novo pathway; 5-formamido-1-(5-phospho-D-ribosyl)imidazole-4-carboxamide from 5-amino-1-(5-phospho-D-ribosyl)imidazole-4-carboxamide (10-formyl THF route): step 1/1. It participates in purine metabolism; IMP biosynthesis via de novo pathway; IMP from 5-formamido-1-(5-phospho-D-ribosyl)imidazole-4-carboxamide: step 1/1. This is Bifunctional purine biosynthesis protein PurH from Aliivibrio salmonicida (strain LFI1238) (Vibrio salmonicida (strain LFI1238)).